A 92-amino-acid chain; its full sequence is Small archaeal modifier protein 3 (92 aa).

Glycyl lysine isopeptide (Lys-Gly) (interchain with G-Cter in SAMP3) cross-links involve residues Lys-18, Lys-55, and Lys-62. Gly-92 is modified (glycyl adenylate; alternate). Residue Gly-92 forms a Glycyl lysine isopeptide (Gly-Lys) (interchain with K-? in acceptor proteins); alternate linkage.

Monomer. Post-translationally, the C-terminal glycine is likely acyl-adenylated (-COAMP) by UbaA.

Functionally, functions as a protein modifier covalently attached to lysine residues of substrate proteins. The protein modification process is termed sampylation and involves the formation of an isopeptide bond between the SAMP3 C-terminal glycine carboxylate and the epsilon-amino group of lysine residues on target proteins. Seems to be able to form polymeric chains with itself at Lys-18, Lys-55 and Lys-62, similar to ubiquitin and other ubiquitin-like proteins. SAMP3 appears not to serve as a proteolytic signal in the cell to target proteins for degradation by proteasomes. May regulate molybdenum cofactor (MoCo) biosynthesis by inhibiting the activity of MPT synthase MoaE under aerobic conditions, providing a hierarchy of oxygen use prior to that of alternative electron acceptors such as DMSO. This chain is Small archaeal modifier protein 3 (samp3), found in Haloferax volcanii (strain ATCC 29605 / DSM 3757 / JCM 8879 / NBRC 14742 / NCIMB 2012 / VKM B-1768 / DS2) (Halobacterium volcanii).